A 142-amino-acid chain; its full sequence is Glia maturation factor beta (142 aa).

Ser2 carries the post-translational modification N-acetylserine. Positions Ser4 to Gly139 constitute an ADF-H domain.

This sequence belongs to the actin-binding proteins ADF family. GMF subfamily. Phosphorylated; stimulated by phorbol ester.

Its function is as follows. This protein causes differentiation of brain cells, stimulation of neural regeneration, and inhibition of proliferation of tumor cells. The chain is Glia maturation factor beta (GMFB) from Homo sapiens (Human).